A 158-amino-acid chain; its full sequence is uncharacterized protein (158 aa).

2 helical membrane passes run Leu66–Met86 and Phe94–Ile114.

The protein resides in the membrane. This is an uncharacterized protein from Saccharomyces cerevisiae (strain ATCC 204508 / S288c) (Baker's yeast).